A 64-amino-acid polypeptide reads, in one-letter code: UPF0370 protein YPA_2246 (64 aa).

The chain crosses the membrane as a helical span at residues 3 to 23 (WLADYWWIILILLVGMILNGI). Basic and acidic residues predominate over residues 36–47 (DNKPELPPHRDN). Residues 36–64 (DNKPELPPHRDNNAQWDDEDDWPDQNKKK) form a disordered region.

This sequence belongs to the UPF0370 family.

It localises to the cell membrane. This is UPF0370 protein YPA_2246 from Yersinia pestis bv. Antiqua (strain Antiqua).